The chain runs to 396 residues: Putative F-box/kelch-repeat protein At4g11770 (396 aa).

The 47-residue stretch at 9-55 (PCNMPYLPDDLLLNILGRVSRLYYPILSLVSKRFRSLVGSLELYKIR) folds into the F-box domain. Kelch repeat units follow at residues 151–197 (YIYM…VLDG), 198–248 (KIYV…YEEK), and 250–296 (YLFG…VFYK).

The polypeptide is Putative F-box/kelch-repeat protein At4g11770 (Arabidopsis thaliana (Mouse-ear cress)).